The primary structure comprises 149 residues: Transcriptional repressor NrdR (149 aa).

Residues 3–34 fold into a zinc finger; that stretch reads CPFCSATDTKVIDSRLVSDGHQVRRRRQCLAC. In terms of domain architecture, ATP-cone spans 49 to 139; it reads PKVIKSNGNR…VYRSFEDIKE (91 aa).

The protein belongs to the NrdR family. Zn(2+) serves as cofactor.

Its function is as follows. Negatively regulates transcription of bacterial ribonucleotide reductase nrd genes and operons by binding to NrdR-boxes. The polypeptide is Transcriptional repressor NrdR (Aliivibrio fischeri (strain ATCC 700601 / ES114) (Vibrio fischeri)).